The sequence spans 326 residues: Beta-ketoacyl-[acyl-carrier-protein] synthase III (326 aa).

Catalysis depends on residues cysteine 112 and histidine 251. An ACP-binding region spans residues 252 to 256 (QANSR). Residue asparagine 281 is part of the active site.

Belongs to the thiolase-like superfamily. FabH family. In terms of assembly, homodimer.

It is found in the cytoplasm. The enzyme catalyses malonyl-[ACP] + acetyl-CoA + H(+) = 3-oxobutanoyl-[ACP] + CO2 + CoA. It participates in lipid metabolism; fatty acid biosynthesis. In terms of biological role, catalyzes the condensation reaction of fatty acid synthesis by the addition to an acyl acceptor of two carbons from malonyl-ACP. Catalyzes the first condensation reaction which initiates fatty acid synthesis and may therefore play a role in governing the total rate of fatty acid production. Possesses both acetoacetyl-ACP synthase and acetyl transacylase activities. Its substrate specificity determines the biosynthesis of branched-chain and/or straight-chain of fatty acids. This Clostridium botulinum (strain Okra / Type B1) protein is Beta-ketoacyl-[acyl-carrier-protein] synthase III.